The chain runs to 327 residues: tRNA uridine(34) hydroxylase (327 aa).

Positions 130–224 (LDEDTVVLDT…YGKDPEVQGE (95 aa)) constitute a Rhodanese domain. Cys184 (cysteine persulfide intermediate) is an active-site residue.

It belongs to the TrhO family.

It carries out the reaction uridine(34) in tRNA + AH2 + O2 = 5-hydroxyuridine(34) in tRNA + A + H2O. Functionally, catalyzes oxygen-dependent 5-hydroxyuridine (ho5U) modification at position 34 in tRNAs. This Streptococcus thermophilus (strain CNRZ 1066) protein is tRNA uridine(34) hydroxylase.